We begin with the raw amino-acid sequence, 788 residues long: Cadherin-10 (788 aa).

Positions 1–22 (MTIYQFLRLFVLWACLPHFCCP) are cleaved as a signal peptide. Residues 23–54 (ELTFRRTPGIQQMTAESRAPRSDGKILHRQKR) constitute a propeptide that is removed on maturation. Over 23–613 (ELTFRRTPGI…LLPAGLSTGA (591 aa)) the chain is Extracellular. Cadherin domains lie at 56–160 (WMWN…EPTF), 161–269 (PEEI…PPRF), 270–384 (PQNT…PPVF), 385–489 (SRSS…APQF), and 489–603 (FAVF…AEAL). A glycan (N-linked (GlcNAc...) asparagine) is linked at N256. N-linked (GlcNAc...) asparagine glycosylation is found at N456 and N534. Residues 614–634 (LIAILLCIIILLVIVVLFAAL) traverse the membrane as a helical segment. The Cytoplasmic portion of the chain corresponds to 635–788 (KRQRKKEPLI…YGGGESDKDA (154 aa)). S784 carries the phosphoserine modification.

It localises to the cell membrane. Its function is as follows. Cadherins are calcium-dependent cell adhesion proteins. They preferentially interact with themselves in a homophilic manner in connecting cells; cadherins may thus contribute to the sorting of heterogeneous cell types. The protein is Cadherin-10 (Cdh10) of Mus musculus (Mouse).